A 362-amino-acid polypeptide reads, in one-letter code: GTPase Obg (362 aa).

The Obg domain occupies 1-159; that stretch reads MKFLDEAKVY…KTIWLRLKLI (159 aa). Residues 160 to 327 enclose the OBG-type G domain; it reads ADAGLVGLPN…VLRALRDVIV (168 aa). GTP-binding positions include 166-173, 191-195, 212-215, 279-282, and 308-310; these read GLPNAGKS, FTTLH, DIPG, SQID, and SAV. Positions 173 and 193 each coordinate Mg(2+). Residues 332–362 form a disordered region; sequence EEKPAKVPKLRHRDMIVSDEGEGEDGADDQP. Over residues 348 to 362 the composition is skewed to acidic residues; the sequence is VSDEGEGEDGADDQP.

This sequence belongs to the TRAFAC class OBG-HflX-like GTPase superfamily. OBG GTPase family. As to quaternary structure, monomer. Requires Mg(2+) as cofactor.

It localises to the cytoplasm. In terms of biological role, an essential GTPase which binds GTP, GDP and possibly (p)ppGpp with moderate affinity, with high nucleotide exchange rates and a fairly low GTP hydrolysis rate. Plays a role in control of the cell cycle, stress response, ribosome biogenesis and in those bacteria that undergo differentiation, in morphogenesis control. The polypeptide is GTPase Obg (Rhizobium etli (strain CIAT 652)).